Here is a 302-residue protein sequence, read N- to C-terminus: Adipolin (302 aa).

The first 20 residues, 1–20 (MRRWAWAAVVVLLGPQLVLL), serve as a signal peptide directing secretion. Disordered regions lie at residues 28-68 (EAQR…GPEF) and 86-110 (ALRK…PPGA). N-linked (GlcNAc...) asparagine glycosylation is present at Asn-43. The segment covering 86–100 (ALRKRCGSRDKKPRD) has biased composition (basic and acidic residues). The region spanning 147 to 302 (LRLVGEAFHC…SSFSGLLLGT (156 aa)) is the C1q domain.

Belongs to the adipolin/erythroferrone family. Homomultimer; disulfide-linked. May interact with ERFE. Post-translationally, processed into Adipolin fC1QTNF12 and Adipolin gC1QTNF12 by FURIN. Insulin enhances endogenous C1QTNF12 cleavage. Predominantly expressed by adipose tissues.

The protein localises to the secreted. Functionally, insulin-sensitizing adipocyte-secreted protein (adipokine) that regulates glucose metabolism in liver and adipose tissue. Promotes glucose uptake in adipocytes and suppresses de novo glucose production in hepatocytes via the PI3K-Akt signaling pathway. Administration lead to reduction of blood glucose. Able to attenuate inflammation in fat tissue. The polypeptide is Adipolin (Homo sapiens (Human)).